Consider the following 486-residue polypeptide: MTQFINGQWVAGLGHEVTSKNPANSEVIWSSKTATAEQVNTAVEAAREVQFDWFMLGFEGRLAIVEAYKTQLEEHKAEMAEVIAQETGKPQWETATEAGAMIGKIGLSVAAYNKRTGSSENDTPAGRAVLRHKPHGVVAVFGPYNFPGHLPNGHIVPALLAGNTVVFKPSELTPKVAELMLKLWEKAGLPAGVINLVQGEVETGKALASHEQIDGLFFTGSSRTGHILHQQYAGEPGKILALEMGGNNPLIIKGVKDTKAAVHDIIQSAYISSGQRCTCARRLYVEKGAEGDALLAELADAVKRIQVGAWNSQPQPFMGSMISETAAKGMVESQRNLLNLGGSSLVELTHLKEGTGLVSPGLIDVTQVIELPDEEYFGPLLQVVRYTDFDEAIKLANKTRYGLSAGILADSRDDYEYFLARIRAGIVNWNKQITGASGAAPFGGVGASGNHRASAFYAADYCAYPVASVEADAVSLPASLSPGLSI.

220–225 (GSSRTG) provides a ligand contact to NAD(+). Residues E243 and C277 contribute to the active site.

It belongs to the aldehyde dehydrogenase family. AstD subfamily.

It catalyses the reaction N-succinyl-L-glutamate 5-semialdehyde + NAD(+) + H2O = N-succinyl-L-glutamate + NADH + 2 H(+). Its pathway is amino-acid degradation; L-arginine degradation via AST pathway; L-glutamate and succinate from L-arginine: step 4/5. In terms of biological role, catalyzes the NAD-dependent reduction of succinylglutamate semialdehyde into succinylglutamate. The sequence is that of N-succinylglutamate 5-semialdehyde dehydrogenase from Shewanella woodyi (strain ATCC 51908 / MS32).